Here is a 219-residue protein sequence, read N- to C-terminus: Cytidylate kinase (219 aa).

Residue 15-23 (GPAASGKGT) coordinates ATP.

This sequence belongs to the cytidylate kinase family. Type 1 subfamily.

It is found in the cytoplasm. The enzyme catalyses CMP + ATP = CDP + ADP. The catalysed reaction is dCMP + ATP = dCDP + ADP. This Brucella abortus (strain S19) protein is Cytidylate kinase.